Reading from the N-terminus, the 6668-residue chain is Centrosome-associated protein CEP250 (6668 aa).

20 coiled-coil regions span residues 562–589 (KAFH…LQQD), 632–666 (TREL…LRAS), 873–988 (HTEC…LRSS), 1042–1087 (LRMS…HEAA), 1252–1307 (VEDL…AVSR), 1333–1427 (LESL…LEKK), 1501–1538 (RPAA…LGTQ), 1594–1688 (REAL…SEVA), 1896–1930 (HDIL…TTEK), 1975–2224 (EETL…AKQS), 2298–3272 (AEDE…LKME), 3298–3436 (QQEL…SRAE), 3526–3599 (LVQL…AKEE), 3697–3773 (CASL…EERR), 3856–4137 (TEML…VEAE), 4170–4486 (RRKL…LRER), 4515–5078 (LETL…FRRR), 5165–5202 (LASL…QETL), 5298–5731 (LREK…QHRV), and 5927–6119 (TQAL…LWRQ).

Post-translationally, proteolytically cleaved; only the full-length form localizes to the inner core, while processed version also localizes to the outer core during the onset of cell division.

The protein resides in the cytoplasm. It is found in the cytoskeleton. The protein localises to the microtubule organizing center. It localises to the centrosome. Its function is as follows. Part of the centrosome inner core complex. Required for the linking of centrosomal inner and outer cores. The sequence is that of Centrosome-associated protein CEP250 from Toxoplasma gondii (strain ATCC 50611 / Me49).